The chain runs to 114 residues: Nuclear transition protein 2 (114 aa).

Residues 1–114 (MDTKMQSLPT…KRRSSGRRYK (114 aa)) are disordered. 8 residues coordinate Zn(2+): H12, H14, H16, H24, C29, C31, C35, and C38. A compositionally biased stretch (low complexity) spans 16 to 25 (HSSSRPQSHT). The short motif at 87–95 (GKVSKRKAV) is the Nuclear localization signal element. Positions 90-114 (SKRKAVRRRKRTHRAKRRSSGRRYK) are enriched in basic residues. A Phosphothreonine; by PKA modification is found at T101. Residue S109 is modified to Phosphoserine; by PKA.

The protein belongs to the nuclear transition protein 2 family. As to expression, testis.

The protein localises to the nucleus. It localises to the nucleolus. Its subcellular location is the chromosome. Functionally, plays a key role in the replacement of histones to protamine in the elongating spermatids of mammals. In condensing spermatids, loaded onto the nucleosomes, where it promotes the recruitment and processing of protamines, which are responsible for histone eviction. This Rattus norvegicus (Rat) protein is Nuclear transition protein 2 (Tnp2).